A 605-amino-acid chain; its full sequence is Protein Spindly (605 aa).

Met-1 carries the post-translational modification N-acetylmethionine. A coiled-coil region spans residues 3–442; that stretch reads TDIVINLRCK…ELKLKYEPEE (440 aa). 3 positions are modified to phosphoserine: Ser-513, Ser-515, and Ser-555. The interval 545 to 581 is disordered; sequence LSERSGNTLNSPRLAAESKLQTEVKEGKETASKLEKE. Positions 564–581 are enriched in basic and acidic residues; sequence LQTEVKEGKETASKLEKE.

The protein belongs to the Spindly family. Interacts with KNTC1 and ZW10. These interactions appear weak and may be transient or indirect. Interacts with dynein intermediate chain and dynactin (DCTN1). Interacts with the catalytically active form of USP45. In terms of processing, monoubiquitinated with'Lys-48' linkage. Deubiquitinated by USP45.

It localises to the cytoplasm. The protein localises to the cytoskeleton. It is found in the microtubule organizing center. The protein resides in the centrosome. Its subcellular location is the chromosome. It localises to the centromere. The protein localises to the kinetochore. It is found in the nucleus. The protein resides in the spindle pole. In terms of biological role, required for the localization of dynein and dynactin to the mitotic kintochore. Dynein is believed to control the initial lateral interaction between the kinetochore and spindle microtubules and to facilitate the subsequent formation of end-on kinetochore-microtubule attachments mediated by the NDC80 complex. Also required for correct spindle orientation. Does not appear to be required for the removal of spindle assembly checkpoint (SAC) proteins from the kinetochore upon bipolar spindle attachment. Acts as an adapter protein linking the dynein motor complex to various cargos and converts dynein from a non-processive to a highly processive motor in the presence of dynactin. Facilitates the interaction between dynein and dynactin and activates dynein processivity (the ability to move along a microtubule for a long distance without falling off the track). Plays a role in cell migration. This chain is Protein Spindly, found in Macaca fascicularis (Crab-eating macaque).